Consider the following 601-residue polypeptide: NAD-dependent malic enzyme 59 kDa isoform, mitochondrial (601 aa).

Residues 1 to 18 (MWRVARSAASTFRRTRRL) constitute a mitochondrion transit peptide. The active-site Proton donor is Tyr-129. Residue Arg-182 participates in NAD(+) binding. The Proton acceptor role is filled by Lys-200. Positions 271, 272, and 295 each coordinate a divalent metal cation. Positions 295 and 444 each coordinate NAD(+).

It belongs to the malic enzymes family. Heterodimer of two related subunits. Requires Mg(2+) as cofactor. Mn(2+) is required as a cofactor.

The protein localises to the mitochondrion matrix. It catalyses the reaction (S)-malate + NAD(+) = pyruvate + CO2 + NADH. The sequence is that of NAD-dependent malic enzyme 59 kDa isoform, mitochondrial from Solanum tuberosum (Potato).